The sequence spans 162 residues: Nucleotide-binding protein Francci3_0558 (162 aa).

It belongs to the YajQ family.

Its function is as follows. Nucleotide-binding protein. This is Nucleotide-binding protein Francci3_0558 from Frankia casuarinae (strain DSM 45818 / CECT 9043 / HFP020203 / CcI3).